The chain runs to 266 residues: UPF0294 protein YafD (266 aa).

The protein belongs to the UPF0294 family.

The protein localises to the cytoplasm. This chain is UPF0294 protein YafD, found in Shigella dysenteriae serotype 1 (strain Sd197).